The chain runs to 123 residues: UPF0426 protein At1g28150, chloroplastic (123 aa).

The N-terminal 26 residues, 1–26 (MGFVLICTCPPSSGVVVSQLHHHQFS), are a transit peptide targeting the chloroplast. Residues 97 to 123 (SGITEEEVDADGVVSNDEDSPQQIEIE) form a disordered region. The span at 100–123 (TEEEVDADGVVSNDEDSPQQIEIE) shows a compositional bias: acidic residues.

It belongs to the UPF0426 family.

It is found in the plastid. The protein localises to the chloroplast. Its subcellular location is the plastoglobule. The protein is UPF0426 protein At1g28150, chloroplastic of Arabidopsis thaliana (Mouse-ear cress).